Consider the following 476-residue polypeptide: Ubiquinone biosynthesis monooxygenase COQ6, mitochondrial (476 aa).

The transit peptide at methionine 1–tryptophan 35 directs the protein to the mitochondrion. Lysine 219 carries the N6-succinyllysine modification.

It belongs to the UbiH/COQ6 family. As to quaternary structure, component of a multi-subunit COQ enzyme complex, composed of at least COQ3, COQ4, COQ5, COQ6, COQ7 and COQ9. Interacts with COQ8B and COQ7. It depends on FAD as a cofactor. As to expression, expressed in the kidney, in podocytes.

Its subcellular location is the mitochondrion inner membrane. The protein resides in the golgi apparatus. It localises to the cell projection. It catalyses the reaction 4-hydroxy-3-(all-trans-decaprenyl)benzoate + 2 reduced [2Fe-2S]-[ferredoxin] + O2 + 2 H(+) = 3,4-dihydroxy-5-(all-trans-decaprenyl)benzoate + 2 oxidized [2Fe-2S]-[ferredoxin] + H2O. The enzyme catalyses 2-methoxy-6-(all-trans-decaprenyl)phenol + 2 reduced [2Fe-2S]-[ferredoxin] + O2 + 2 H(+) = 2-methoxy-6-(all-trans-decaprenyl)benzene-1,4-diol + 2 oxidized [2Fe-2S]-[ferredoxin] + H2O. The protein operates within cofactor biosynthesis; ubiquinone biosynthesis. Functionally, FAD-dependent monooxygenase required for two non-consecutive steps during ubiquinone biosynthesis. Required for the C5-ring hydroxylation during ubiquinone biosynthesis by catalyzing the hydroxylation of 4-hydroxy-3-(all-trans-decaprenyl)benzoic acid to 3,4-dihydroxy-5-(all-trans-decaprenyl)benzoic acid. Also acts downstream of COQ4, for the C1-hydroxylation during ubiquinone biosynthesis by catalyzing the hydroxylation of 2-methoxy-6-(all-trans-decaprenyl)phenol to 2-methoxy-6-(all-trans-decaprenyl)benzene-1,4-diol. The electrons required for the hydroxylation reaction are funneled indirectly to COQ6 from NADPH via a ferredoxin/ferredoxin reductase system composed of FDX2 and FDXR. The protein is Ubiquinone biosynthesis monooxygenase COQ6, mitochondrial of Mus musculus (Mouse).